Here is a 149-residue protein sequence, read N- to C-terminus: Protein NrdI (149 aa).

It belongs to the NrdI family.

In terms of biological role, probably involved in ribonucleotide reductase function. The polypeptide is Protein NrdI (Malacoplasma penetrans (strain HF-2) (Mycoplasma penetrans)).